Consider the following 89-residue polypeptide: Large ribosomal subunit protein bL31B (89 aa).

This sequence belongs to the bacterial ribosomal protein bL31 family. Type B subfamily. As to quaternary structure, part of the 50S ribosomal subunit.

In Enterococcus faecalis (strain ATCC 700802 / V583), this protein is Large ribosomal subunit protein bL31B.